The sequence spans 528 residues: Protein spinster homolog 1 (528 aa).

The disordered stretch occupies residues 1-44 (MSGSDTAPFLSQADDTDDGPAPGTPGLPGSMGNPKSEDPAVPDQ). Transmembrane regions (helical) follow at residues 50-70 (ITGL…YINL), 98-118 (GLIQ…FGYL), 126-146 (YLMC…SFIP), 160-180 (VGVG…DLFV), 187-207 (MLSV…IAGS), 218-238 (WALR…FLVV), 278-298 (LGFT…PAFL), 323-343 (LIFG…GVEI), 357-377 (LVCA…LACA), 381-401 (IVAT…NWAI), 421-441 (FQIV…IGSI), and 465-485 (MLCA…AIFI). Position 518 is a phosphoserine (Ser-518).

It belongs to the major facilitator superfamily. Spinster (TC 2.A.1.49) family. Interacts with BCL2 and BCL2L1.

It is found in the lysosome membrane. It catalyses the reaction a 1-acyl-sn-glycero-3-phosphocholine(out) + H(+)(out) = a 1-acyl-sn-glycero-3-phosphocholine(in) + H(+)(in). The enzyme catalyses 1-hexadecanoyl-sn-glycero-3-phosphocholine(out) + H(+)(out) = 1-hexadecanoyl-sn-glycero-3-phosphocholine(in) + H(+)(in). It carries out the reaction 1-(9Z-octadecenoyl)-sn-glycero-3-phosphocholine(out) + H(+)(out) = 1-(9Z-octadecenoyl)-sn-glycero-3-phosphocholine(in) + H(+)(in). The catalysed reaction is 1-(5Z,8Z,11Z,14Z-eicosatetraenoyl)-sn-glycero-3-phosphocholine(out) + H(+)(out) = 1-(5Z,8Z,11Z,14Z-eicosatetraenoyl)-sn-glycero-3-phosphocholine(in) + H(+)(in). It catalyses the reaction 1-(4Z,7Z,10Z,13Z,16Z,19Z-docosahexaenoyl)-sn-glycero-3-phosphocholine(out) + H(+)(out) = 1-(4Z,7Z,10Z,13Z,16Z,19Z-docosahexaenoyl)-sn-glycero-3-phosphocholine(in) + H(+)(in). The enzyme catalyses a 1-acyl-sn-glycero-3-phosphoethanolamine(out) + H(+)(out) = a 1-acyl-sn-glycero-3-phosphoethanolamine(in) + H(+)(in). It carries out the reaction 1-(9Z-octadecenoyl)-sn-glycero-3-phosphoethanolamine(out) + H(+)(out) = 1-(9Z-octadecenoyl)-sn-glycero-3-phosphoethanolamine(in) + H(+)(in). The catalysed reaction is 1-acyl-sn-glycero-3-phospho-(1'-sn-glycerol)(out) + H(+)(out) = 1-acyl-sn-glycero-3-phospho-(1'-sn-glycerol)(in) + H(+)(in). It catalyses the reaction 1-(9Z-octadecenoyl)-sn-glycero-3-phospho-(1'-sn-glycerol)(out) + H(+)(out) = 1-(9Z-octadecenoyl)-sn-glycero-3-phospho-(1'-sn-glycerol)(in) + H(+)(in). The enzyme catalyses a 1-O-(1Z-alkenyl)-sn-glycero-3-phosphocholine(out) + H(+)(out) = a 1-O-(1Z-alkenyl)-sn-glycero-3-phosphocholine(in) + H(+)(in). It carries out the reaction 1-(1Z-hexadecenyl)-sn-glycero-3-phosphocholine(out) + H(+)(out) = 1-(1Z-hexadecenyl)-sn-glycero-3-phosphocholine(in) + H(+)(in). The catalysed reaction is a 1-O-(1Z-alkenyl)-sn-glycero-3-phosphoethanolamine(out) + H(+)(out) = a 1-O-(1Z-alkenyl)-sn-glycero-3-phosphoethanolamine(in) + H(+)(in). It catalyses the reaction 1-O-(1Z-hexadecenyl)-sn-glycero-3-phosphoethanolamine(out) + H(+)(out) = 1-O-(1Z-hexadecenyl)-sn-glycero-3-phosphoethanolamine(in) + H(+)(in). In terms of biological role, plays a critical role in the phospholipid salvage pathway from lysosomes to the cytosol. Mediates the rate-limiting, proton-dependent, lysosomal efflux of lysophospholipids, which can then be reacylated by acyltransferases in the endoplasmic reticulum to form phospholipids. Selective for zwitterionic headgroups such as lysophosphatidylcholine (LPC) and lysophosphatidylethanolamine (LPE), can also transport lysophosphatidylglycerol (LPG), but not other anionic lysophospholipids, sphingosine, nor sphingomyelin. Transports lysophospholipids with saturated, monounsaturated, and polyunsaturated fatty acids, such as 1-hexadecanoyl-sn-glycero-3-phosphocholine, 1-(9Z-octadecenoyl)-sn-glycero-3-phosphocholine and 1-(4Z,7Z,10Z,13Z,16Z,19Z-docosahexaenoyl)-sn-glycero-3-phosphocholine, respectively. Can also transport lysoplasmalogen (LPC with a fatty alcohol) such as 1-(1Z-hexadecenyl)-sn-glycero-3-phosphocholine. Essential player in lysosomal homeostasis. Crucial for cell survival under conditions of nutrient limitation. May be involved in necrotic or autophagic cell death. The polypeptide is Protein spinster homolog 1 (SPNS1) (Bos taurus (Bovine)).